Here is a 599-residue protein sequence, read N- to C-terminus: Leishmanolysin (599 aa).

An N-terminal signal peptide occupies residues 1-39 (MSVDSSSTHRHRSVAARLVRLAAAGAAVIAAVGTAAAWA). Residues 40–97 (HAGAVQHRCIHDAMQARVRQSVARHHTAPGAVSAVGLPYVTLDTAAAADRRPGSAPTV) constitute a propeptide, activation peptide. 2 disulfide bridges follow: Cys-122–Cys-139 and Cys-188–Cys-227. Zn(2+) is bound at residue His-261. Glu-262 is an active-site residue. His-265 is a binding site for Zn(2+). The N-linked (GlcNAc...) asparagine glycan is linked to Asn-297. 7 disulfide bridges follow: Cys-311/Cys-383, Cys-390/Cys-452, Cys-403/Cys-422, Cys-412/Cys-486, Cys-463/Cys-507, Cys-512/Cys-562, and Cys-532/Cys-555. His-331 is a Zn(2+) binding site. Asn-394 carries an N-linked (GlcNAc...) asparagine glycan. A lipid anchor (GPI-anchor amidated asparagine) is attached at Asn-574. Residues 575 to 599 (AAAGRRGPRAAATALLVAALLAVAL) constitute a propeptide, removed in mature form.

The protein belongs to the peptidase M8 family. Zn(2+) is required as a cofactor.

Its subcellular location is the cell membrane. It carries out the reaction Preference for hydrophobic residues at P1 and P1' and basic residues at P2' and P3'. A model nonapeptide is cleaved at -Ala-Tyr-|-Leu-Lys-Lys-.. Has an integral role during the infection of macrophages in the mammalian host. The sequence is that of Leishmanolysin (gp63) from Leishmania chagasi.